The chain runs to 342 residues: MSELRVAVLGVGVMGADHVARITSRISGARVSVVNDYVTEKAEQIASEVDGCRAVVDPLDAIADPEVDAVVLATPGSTHEKQLLACLDHRKPVMCEKPLTTDVFTSLEIARREAELECPLIQVGFMRRFDDEYMRLKALLDGGELGQPLVMHCVHRNPGVPSYFDSSLIVKDSLVHEVDVTRYLFGEEIASVQIVRPVSNPAAPEGVIDPQIAILRTVSGRHVDVELFVTTGVAYEVRTEVVGERGSAMIGLDVGLIRKSAPGTWGGLIAPGFRERFGRAYDTEIQRWVDAVRAGTNIDGPTAWDGYAAAAVCAAGVESLESGLPVPVHLAERPDRSTIRPR.

It belongs to the Gfo/Idh/MocA family. In terms of assembly, homotetramer.

It catalyses the reaction myo-inositol + NAD(+) = scyllo-inosose + NADH + H(+). Its function is as follows. Involved in the oxidation of myo-inositol (MI) to 2-keto-myo-inositol (2KMI or 2-inosose). The chain is Inositol 2-dehydrogenase 2 from Mycolicibacterium vanbaalenii (strain DSM 7251 / JCM 13017 / BCRC 16820 / KCTC 9966 / NRRL B-24157 / PYR-1) (Mycobacterium vanbaalenii).